We begin with the raw amino-acid sequence, 419 residues long: eIF5-mimic protein 2-A (419 aa).

Residues 1 to 15 (MNNQKQQKPTLTGQR) are compositionally biased toward polar residues. The tract at residues 1-29 (MNNQKQQKPTLTGQRFKTRKRDEKERFDP) is disordered. Residues 247–414 (NQQSIGARKE…KNAEEESESE (168 aa)) form the W2 domain.

The protein belongs to the BZW family.

In terms of biological role, translation initiation regulator which may repress repeat-associated non-AUG (RAN) initiated translation probably by acting as a competitive inhibitor of eukaryotic translation initiation factor 5 (EIF5) function. Enhances histone H4 gene transcription but does not seem to bind DNA directly. This chain is eIF5-mimic protein 2-A (bzw1a), found in Danio rerio (Zebrafish).